Consider the following 184-residue polypeptide: Ethylene-responsive transcription factor ERF010 (184 aa).

Residues 20–77 constitute a DNA-binding region (AP2/ERF); it reads PYKGIRMRKWGKWVAEIREPNKRSRLWLGSYSTPEAAARAYDTAVFYLRGPTARLNFP. The segment at 123–184 is disordered; the sequence is QNRDSDVDNK…SSDEEWESKH (62 aa). A compositionally biased stretch (basic and acidic residues) spans 161-172; it reads LLDRVDLNKLPD. Positions 174-184 are enriched in acidic residues; sequence ESSDEEWESKH.

Belongs to the AP2/ERF transcription factor family. ERF subfamily.

The protein resides in the nucleus. Probably acts as a transcriptional activator. Binds to the GCC-box pathogenesis-related promoter element. May be involved in the regulation of gene expression by stress factors and by components of stress signal transduction pathways. The polypeptide is Ethylene-responsive transcription factor ERF010 (ERF010) (Arabidopsis thaliana (Mouse-ear cress)).